A 376-amino-acid polypeptide reads, in one-letter code: Methionine import ATP-binding protein MetN 2 (376 aa).

The segment at 1-25 (MTATAQRQRPIDTTGAGQRAQQAEL) is disordered. Residues 34-273 (VRFINLGKTY…PQHEVSKTLL (240 aa)) form the ABC transporter domain. 70–77 (GRSGAGKS) contributes to the ATP binding site.

This sequence belongs to the ABC transporter superfamily. Methionine importer (TC 3.A.1.24) family. In terms of assembly, the complex is composed of two ATP-binding proteins (MetN), two transmembrane proteins (MetI) and a solute-binding protein (MetQ).

The protein resides in the cell inner membrane. It catalyses the reaction L-methionine(out) + ATP + H2O = L-methionine(in) + ADP + phosphate + H(+). The catalysed reaction is D-methionine(out) + ATP + H2O = D-methionine(in) + ADP + phosphate + H(+). Its function is as follows. Part of the ABC transporter complex MetNIQ involved in methionine import. Responsible for energy coupling to the transport system. This is Methionine import ATP-binding protein MetN 2 from Pseudomonas syringae pv. syringae (strain B728a).